The sequence spans 72 residues: Bowman-Birk type proteinase inhibitor (72 aa).

7 cysteine pairs are disulfide-bonded: C8–C61, C9–C24, C12–C57, C14–C22, C31–C38, C35–C50, and C40–C48.

This sequence belongs to the Bowman-Birk serine protease inhibitor family.

This inhibitor has two domains, each with separate antiprotease activity. 1 mole of inhibitor inhibits either 1 mole of trypsin or 2 moles of chymotrypsin, stoichiometrically. This is Bowman-Birk type proteinase inhibitor from Vicia sativa subsp. nigra (Common vetch).